The following is a 280-amino-acid chain: Eukaryotic translation initiation factor 3 subunit F-1 (280 aa).

The MPN domain occupies Val8–Gly138.

It belongs to the eIF-3 subunit F family. Component of the eukaryotic translation initiation factor 3 (eIF-3) complex. The eIF-3 complex interacts with pix.

It is found in the cytoplasm. Component of the eukaryotic translation initiation factor 3 (eIF-3) complex, which is involved in protein synthesis of a specialized repertoire of mRNAs and, together with other initiation factors, stimulates binding of mRNA and methionyl-tRNAi to the 40S ribosome. The eIF-3 complex specifically targets and initiates translation of a subset of mRNAs involved in cell proliferation. The polypeptide is Eukaryotic translation initiation factor 3 subunit F-1 (Drosophila ananassae (Fruit fly)).